The primary structure comprises 600 residues: UvrABC system protein C (600 aa).

Residues E16–V94 form the GIY-YIG domain. In terms of domain architecture, UVR spans H208 to Y243.

Belongs to the UvrC family. In terms of assembly, interacts with UvrB in an incision complex.

It localises to the cytoplasm. Its function is as follows. The UvrABC repair system catalyzes the recognition and processing of DNA lesions. UvrC both incises the 5' and 3' sides of the lesion. The N-terminal half is responsible for the 3' incision and the C-terminal half is responsible for the 5' incision. In Porphyromonas gingivalis (strain ATCC 33277 / DSM 20709 / CIP 103683 / JCM 12257 / NCTC 11834 / 2561), this protein is UvrABC system protein C.